The primary structure comprises 142 residues: Crustacean hyperglycemic hormones (142 aa).

An N-terminal signal peptide occupies residues Met1–Ala26. A Pyrrolidone carboxylic acid; partial modification is found at Gln67. 3 disulfide bridges follow: Cys73/Cys109, Cys89/Cys105, and Cys92/Cys118. Val138 carries the post-translational modification Valine amide.

The protein belongs to the arthropod CHH/MIH/GIH/VIH hormone family. Post-translationally, the N-terminus is blocked only in isoform CHH-II but not in isoform CHH-I. In terms of tissue distribution, produced by the medulla terminalis X-organ in the eyestalks and transported to the sinus gland where they are stored and released.

The protein resides in the secreted. In terms of biological role, hormone found in the sinus gland of isopods and decapods which controls the blood sugar level. Has a secretagogue action over the amylase released from the midgut gland. May act as a stress hormone and may be involved in the control of molting and reproduction. The protein is Crustacean hyperglycemic hormones of Carcinus maenas (Common shore crab).